We begin with the raw amino-acid sequence, 236 residues long: Demethylmenaquinone methyltransferase (236 aa).

Residues Thr-58, Asp-79, and 106–107 each bind S-adenosyl-L-methionine; that span reads NA.

Belongs to the class I-like SAM-binding methyltransferase superfamily. MenG/UbiE family.

The enzyme catalyses a 2-demethylmenaquinol + S-adenosyl-L-methionine = a menaquinol + S-adenosyl-L-homocysteine + H(+). It functions in the pathway quinol/quinone metabolism; menaquinone biosynthesis; menaquinol from 1,4-dihydroxy-2-naphthoate: step 2/2. Methyltransferase required for the conversion of demethylmenaquinol (DMKH2) to menaquinol (MKH2). This chain is Demethylmenaquinone methyltransferase, found in Alkalihalophilus pseudofirmus (strain ATCC BAA-2126 / JCM 17055 / OF4) (Bacillus pseudofirmus).